The sequence spans 559 residues: SH3 domain-binding protein 2 (559 aa).

One can recognise a PH domain in the interval 26–130 (GVAKAGYLHK…WMAFVRREIG (105 aa)). The segment at 164–449 (LSSYPMDNED…EDSDEDYEKV (286 aa)) is disordered. A compositionally biased stretch (acidic residues) spans 170-184 (DNEDYEHEDEDDSYL). Residues Y174 and Y183 each carry the phosphotyrosine; by SYK modification. An SH3-binding motif is present at residues 201 to 210 (PPAYPPPPVP). 2 stretches are compositionally biased toward pro residues: residues 202 to 213 (PAYPPPPVPVPR) and 233 to 242 (PLLPPPPPKR). Over residues 252–265 (EDAKDALGLRRVEP) the composition is skewed to basic and acidic residues. S277 bears the Phosphoserine mark. Over residues 313-327 (TSSVSSSTTMAVATS) the composition is skewed to low complexity. A compositionally biased stretch (basic and acidic residues) spans 360-371 (KIAEEPSPREAA). The span at 375-386 (PVPPVAPRPPVQ) shows a compositional bias: pro residues. Residues S414 and S425 each carry the phosphoserine modification. Over residues 437–446 (TGEEDSDEDY) the composition is skewed to acidic residues. At Y446 the chain carries Phosphotyrosine; by SYK. The region spanning 455 to 553 (VFVNTTESCE…HQSLLLRHPY (99 aa)) is the SH2 domain.

Post-translationally, phosphorylated. Phosphorylation at Tyr-446 may stimulate the activity of the LYN kinase.

In terms of biological role, binds differentially to the SH3 domains of certain proteins of signal transduction pathways. Binds to phosphatidylinositols; linking the hemopoietic tyrosine kinase fes to the cytoplasmic membrane in a phosphorylation dependent mechanism. This Mus musculus (Mouse) protein is SH3 domain-binding protein 2 (Sh3bp2).